The sequence spans 309 residues: Ecto-ADP-ribosyltransferase 5 (309 aa).

The first 23 residues, 1-23, serve as a signal peptide directing secretion; it reads MILEDLLMVLSCLSLHALWKVRA. Cysteines 43 and 259 form a disulfide. The 191-residue stretch at 63-253 folds into the TR mART core domain; it reads ALLRESWEAA…IVTLWSYDQT (191 aa). Y100 serves as a coordination point for NAD(+). N102 is a glycosylation site (N-linked (GlcNAc...) asparagine). 2 residues coordinate NAD(+): R161 and Q181. Residue R161 is part of the active site. S184 is a catalytic residue. A glycan (N-linked (GlcNAc...) asparagine) is linked at N197. Residue S215 participates in NAD(+) binding. E222 is a catalytic residue.

The protein belongs to the Arg-specific ADP-ribosyltransferase family. In terms of tissue distribution, abundantly expressed in testis. Lower levels in cardiac and skeletal muscle.

The protein resides in the secreted. Its subcellular location is the membrane. It catalyses the reaction L-arginyl-[protein] + NAD(+) = N(omega)-(ADP-D-ribosyl)-L-arginyl-[protein] + nicotinamide + H(+). This Mus musculus (Mouse) protein is Ecto-ADP-ribosyltransferase 5 (Art5).